The chain runs to 402 residues: Type II NADH:quinone oxidoreductase (402 aa).

FAD is bound by residues 12 to 16 (GAGYA), 39 to 40 (NK), and V83. Residue E172 is part of the active site. FAD is bound by residues D302, 319-320 (AQ), and K379.

It belongs to the NADH dehydrogenase family. The cofactor is FAD.

Its subcellular location is the cell membrane. The catalysed reaction is a quinone + NADH + H(+) = a quinol + NAD(+). Alternative, nonproton pumping NADH:quinone oxidoreductase that delivers electrons to the respiratory chain by oxidation of NADH and reduction of quinones, and contributes to the regeneration of NAD(+). This is Type II NADH:quinone oxidoreductase from Staphylococcus saprophyticus subsp. saprophyticus (strain ATCC 15305 / DSM 20229 / NCIMB 8711 / NCTC 7292 / S-41).